Reading from the N-terminus, the 440-residue chain is Histidinol dehydrogenase (440 aa).

Tyr133, Gln194, and Asn217 together coordinate NAD(+). Ser240, Gln262, and His265 together coordinate substrate. Residues Gln262 and His265 each coordinate Zn(2+). Catalysis depends on proton acceptor residues Glu330 and His331. Residues His331, Asp364, Glu418, and His423 each coordinate substrate. Asp364 contacts Zn(2+). His423 is a binding site for Zn(2+).

The protein belongs to the histidinol dehydrogenase family. It depends on Zn(2+) as a cofactor.

The enzyme catalyses L-histidinol + 2 NAD(+) + H2O = L-histidine + 2 NADH + 3 H(+). Its pathway is amino-acid biosynthesis; L-histidine biosynthesis; L-histidine from 5-phospho-alpha-D-ribose 1-diphosphate: step 9/9. Functionally, catalyzes the sequential NAD-dependent oxidations of L-histidinol to L-histidinaldehyde and then to L-histidine. The chain is Histidinol dehydrogenase from Nitrosospira multiformis (strain ATCC 25196 / NCIMB 11849 / C 71).